Here is a 473-residue protein sequence, read N- to C-terminus: NAC domain-containing protein 68 (473 aa).

The NAC domain maps to 4–154 (GLIGYRFSPT…KYVVCQVKYK (151 aa)). A DNA-binding region spans residues 108-160 (IGIKKTLVYHEGKSPHGVRTPWVMHEYHITCLPHHKRKYVVCQVKYKGEAAEI). The segment at 326-380 (DHMPRKPVTGTIDYSSDSGSDAGSISTTSYQGTSSPNISVGSSSRHLSSCSSTDS) is disordered. Composition is skewed to low complexity over residues 340 to 354 (SSDSGSDAGSISTTS) and 364 to 379 (SVGSSSRHLSSCSSTD). Residues 446–468 (FIYLMKMIIGNIISVLLPVKRLI) traverse the membrane as a helical segment.

It localises to the membrane. The protein resides in the nucleus. Its function is as follows. Transcription activator activated by proteolytic cleavage through regulated intramembrane proteolysis (RIP) mediated by calpain or its functional homolog. Regulates cytokinin signaling during cell division. In Arabidopsis thaliana (Mouse-ear cress), this protein is NAC domain-containing protein 68 (NAC68).